The sequence spans 152 residues: Deoxyuridine 5'-triphosphate nucleotidohydrolase (152 aa).

Substrate contacts are provided by residues 62–64 (RSG), Asn75, and 79–81 (TVD).

It belongs to the dUTPase family. Mg(2+) serves as cofactor.

The catalysed reaction is dUTP + H2O = dUMP + diphosphate + H(+). It functions in the pathway pyrimidine metabolism; dUMP biosynthesis; dUMP from dCTP (dUTP route): step 2/2. Functionally, this enzyme is involved in nucleotide metabolism: it produces dUMP, the immediate precursor of thymidine nucleotides and it decreases the intracellular concentration of dUTP so that uracil cannot be incorporated into DNA. The polypeptide is Deoxyuridine 5'-triphosphate nucleotidohydrolase (Leifsonia xyli subsp. xyli (strain CTCB07)).